The primary structure comprises 139 residues: Protein LTO1 homolog (139 aa).

The protein belongs to the LTO1 family.

This chain is Protein LTO1 homolog, found in Dictyostelium discoideum (Social amoeba).